We begin with the raw amino-acid sequence, 447 residues long: Argininosuccinate synthase (447 aa).

Residues 17–25 (AFSGGLDTS) and alanine 43 contribute to the ATP site. Residue tyrosine 99 coordinates L-citrulline. ATP is bound by residues glycine 129 and threonine 131. L-aspartate is bound by residues threonine 131, asparagine 135, and aspartate 136. L-citrulline is bound at residue asparagine 135. Position 136 (aspartate 136) interacts with ATP. L-citrulline-binding residues include arginine 139 and serine 192. Residue aspartate 194 coordinates ATP. Residues threonine 201, glutamate 203, and glutamate 280 each contribute to the L-citrulline site.

It belongs to the argininosuccinate synthase family. Type 2 subfamily. In terms of assembly, homotetramer.

Its subcellular location is the cytoplasm. It carries out the reaction L-citrulline + L-aspartate + ATP = 2-(N(omega)-L-arginino)succinate + AMP + diphosphate + H(+). Its pathway is amino-acid biosynthesis; L-arginine biosynthesis; L-arginine from L-ornithine and carbamoyl phosphate: step 2/3. In Salmonella schwarzengrund (strain CVM19633), this protein is Argininosuccinate synthase.